The following is a 444-amino-acid chain: N-succinylarginine dihydrolase (444 aa).

Residues 19-28, asparagine 110, and 137-138 each bind substrate; these read AGLSFGNVAS and HR. The active site involves glutamate 174. Arginine 214 contributes to the substrate binding site. Histidine 250 is a catalytic residue. Positions 252 and 362 each coordinate substrate. The Nucleophile role is filled by cysteine 368.

It belongs to the succinylarginine dihydrolase family. In terms of assembly, homodimer.

It catalyses the reaction N(2)-succinyl-L-arginine + 2 H2O + 2 H(+) = N(2)-succinyl-L-ornithine + 2 NH4(+) + CO2. The protein operates within amino-acid degradation; L-arginine degradation via AST pathway; L-glutamate and succinate from L-arginine: step 2/5. Functionally, catalyzes the hydrolysis of N(2)-succinylarginine into N(2)-succinylornithine, ammonia and CO(2). This chain is N-succinylarginine dihydrolase, found in Shewanella oneidensis (strain ATCC 700550 / JCM 31522 / CIP 106686 / LMG 19005 / NCIMB 14063 / MR-1).